The chain runs to 344 residues: N-acetyl-gamma-glutamyl-phosphate reductase (344 aa).

C149 is a catalytic residue.

This sequence belongs to the NAGSA dehydrogenase family. Type 1 subfamily.

Its subcellular location is the cytoplasm. It catalyses the reaction N-acetyl-L-glutamate 5-semialdehyde + phosphate + NADP(+) = N-acetyl-L-glutamyl 5-phosphate + NADPH + H(+). Its pathway is amino-acid biosynthesis; L-arginine biosynthesis; N(2)-acetyl-L-ornithine from L-glutamate: step 3/4. Catalyzes the NADPH-dependent reduction of N-acetyl-5-glutamyl phosphate to yield N-acetyl-L-glutamate 5-semialdehyde. The polypeptide is N-acetyl-gamma-glutamyl-phosphate reductase (Thermoanaerobacter sp. (strain X514)).